Here is a 65-residue protein sequence, read N- to C-terminus: Ringhalexin (65 aa).

Cystine bridges form between cysteine 3-cysteine 24, cysteine 17-cysteine 42, cysteine 46-cysteine 57, and cysteine 58-cysteine 63.

Expressed by the venom gland.

The protein resides in the secreted. Its function is as follows. Has anticoagulant activity, since it is able to inhibit the activation of coagulation factor X (F10) by coagulation factor VIIa (F7) (IC(50)=123.8 nM). Also shows weak irreversible neurotoxicity. The chain is Ringhalexin from Hemachatus haemachatus (Rinkhals).